We begin with the raw amino-acid sequence, 377 residues long: 3-dehydroquinate synthase (377 aa).

Residues 113–117 (GVIGD), 137–138 (TT), lysine 150, and lysine 159 contribute to the NAD(+) site. Positions 192, 254, and 273 each coordinate Zn(2+).

Belongs to the sugar phosphate cyclases superfamily. Dehydroquinate synthase family. Requires Co(2+) as cofactor. It depends on Zn(2+) as a cofactor. NAD(+) serves as cofactor.

The protein resides in the cytoplasm. It catalyses the reaction 7-phospho-2-dehydro-3-deoxy-D-arabino-heptonate = 3-dehydroquinate + phosphate. It functions in the pathway metabolic intermediate biosynthesis; chorismate biosynthesis; chorismate from D-erythrose 4-phosphate and phosphoenolpyruvate: step 2/7. Catalyzes the conversion of 3-deoxy-D-arabino-heptulosonate 7-phosphate (DAHP) to dehydroquinate (DHQ). In Bartonella bacilliformis (strain ATCC 35685 / KC583 / Herrer 020/F12,63), this protein is 3-dehydroquinate synthase.